The following is a 291-amino-acid chain: Phosphatidylglycerol--prolipoprotein diacylglyceryl transferase (291 aa).

Helical transmembrane passes span 21-41 (VSLH…MWLA), 60-80 (LLYA…VLFY), 96-116 (WDGG…MIWF), 130-150 (FIAP…FING), 198-218 (SQLY…NLFI), 225-245 (GAVS…VEFF), and 260-280 (ISMG…MMIW). A 1,2-diacyl-sn-glycero-3-phospho-(1'-sn-glycerol) is bound at residue Arg143.

The protein belongs to the Lgt family.

The protein localises to the cell inner membrane. It carries out the reaction L-cysteinyl-[prolipoprotein] + a 1,2-diacyl-sn-glycero-3-phospho-(1'-sn-glycerol) = an S-1,2-diacyl-sn-glyceryl-L-cysteinyl-[prolipoprotein] + sn-glycerol 1-phosphate + H(+). It participates in protein modification; lipoprotein biosynthesis (diacylglyceryl transfer). Catalyzes the transfer of the diacylglyceryl group from phosphatidylglycerol to the sulfhydryl group of the N-terminal cysteine of a prolipoprotein, the first step in the formation of mature lipoproteins. The sequence is that of Phosphatidylglycerol--prolipoprotein diacylglyceryl transferase from Cronobacter sakazakii (strain ATCC BAA-894) (Enterobacter sakazakii).